Consider the following 187-residue polypeptide: Cerebral dopamine neurotrophic factor (187 aa).

Positions 1–24 (MRCTSPAALVTFCAGLWISNHVLA) are cleaved as a signal peptide. Disulfide bonds link cysteine 37-cysteine 124, cysteine 40-cysteine 113, and cysteine 71-cysteine 82.

Belongs to the ARMET family.

Its subcellular location is the secreted. Functionally, trophic factor for dopamine neurons. Prevents the 6-hydroxydopamine (6-OHDA)-induced degeneration of dopaminergic neurons. When administered after 6-OHDA-lesioning, restores the dopaminergic function and prevents the degeneration of dopaminergic neurons in substantia nigra. This Rattus norvegicus (Rat) protein is Cerebral dopamine neurotrophic factor (Cdnf).